A 257-amino-acid polypeptide reads, in one-letter code: TLC domain-containing protein 3A (257 aa).

7 consecutive transmembrane segments (helical) span residues 1–21, 42–62, 77–97, 113–135, 142–162, 181–201, and 220–240; these read MLLT…LCTW, LVSS…IRSC, VWFL…CEWC, FLSR…VPVA, LGDF…FVSL, GILT…FMYW, and FYCN…FCLL. The TLC domain occupies 33–249; sequence TDCVMISTRL…LCRKAVRLFD (217 aa).

In terms of assembly, interacts with GGT7 isoform 3 and SLC3A2. In terms of tissue distribution, highly expressed in pancreas. Detected at intermediate levels in heart, placenta and kidney, and at low levels in brain, liver and skeletal muscle. Not detected in normal lung.

Its subcellular location is the cell membrane. This chain is TLC domain-containing protein 3A, found in Homo sapiens (Human).